The chain runs to 218 residues: Embryonic polyadenylate-binding protein 2-A (218 aa).

The segment covering Met1–Gly16 has biased composition (basic and acidic residues). Disordered regions lie at residues Met1 to Glu26 and Arg169 to Tyr218. The 78-residue stretch at Arg93–Thr170 folds into the RRM domain. Residues Phe205–Tyr218 show a composition bias toward low complexity.

It is found in the cytoplasm. Functionally, binds the poly(A) tail of mRNA. Unable to interact with the cap-binding complex and is therefore unlikely to be involved in translation initiation. In Xenopus laevis (African clawed frog), this protein is Embryonic polyadenylate-binding protein 2-A (Pabpn1l-a).